We begin with the raw amino-acid sequence, 752 residues long: Cation-transporting P-type ATPase B (752 aa).

The 64-residue stretch at 15–78 (RRIRLDVSGM…VVEKAGYHAA (64 aa)) folds into the HMA domain. A metal cation contacts are provided by Cys-26 and Cys-29. A run of 6 helical transmembrane segments spans residues 105–125 (LLVA…FAIV), 132–152 (GWGY…AWPF), 167–187 (METL…SSVF), 201–221 (AILN…VFVL), 361–381 (IAGV…AAWL), and 390–410 (AFSV…GLAT). Residue Asp-446 is the 4-aspartylphosphate intermediate of the active site. Residues 714-734 (AIPIAAAGLLNPLIAGAAMAF) traverse the membrane as a helical segment.

It belongs to the cation transport ATPase (P-type) (TC 3.A.3) family. Type IB subfamily.

It is found in the cell membrane. It carries out the reaction ATP + H2O = ADP + phosphate + H(+). This Mycobacterium bovis (strain ATCC BAA-935 / AF2122/97) protein is Cation-transporting P-type ATPase B (ctpB).